The primary structure comprises 352 residues: Protein RecA (352 aa).

68-75 (GPESSGKT) contributes to the ATP binding site.

This sequence belongs to the RecA family.

It localises to the cytoplasm. Can catalyze the hydrolysis of ATP in the presence of single-stranded DNA, the ATP-dependent uptake of single-stranded DNA by duplex DNA, and the ATP-dependent hybridization of homologous single-stranded DNAs. It interacts with LexA causing its activation and leading to its autocatalytic cleavage. This chain is Protein RecA, found in Clostridium perfringens (strain ATCC 13124 / DSM 756 / JCM 1290 / NCIMB 6125 / NCTC 8237 / Type A).